We begin with the raw amino-acid sequence, 362 residues long: UDP-N-acetylglucosamine--N-acetylmuramyl-(pentapeptide) pyrophosphoryl-undecaprenol N-acetylglucosamine transferase (362 aa).

UDP-N-acetyl-alpha-D-glucosamine is bound by residues 15-17 (TGG), Asn-127, Arg-165, Ser-191, Ile-247, 266-271 (ALTVSE), and Gln-292.

The protein belongs to the glycosyltransferase 28 family. MurG subfamily.

The protein localises to the cell inner membrane. The enzyme catalyses di-trans,octa-cis-undecaprenyl diphospho-N-acetyl-alpha-D-muramoyl-L-alanyl-D-glutamyl-meso-2,6-diaminopimeloyl-D-alanyl-D-alanine + UDP-N-acetyl-alpha-D-glucosamine = di-trans,octa-cis-undecaprenyl diphospho-[N-acetyl-alpha-D-glucosaminyl-(1-&gt;4)]-N-acetyl-alpha-D-muramoyl-L-alanyl-D-glutamyl-meso-2,6-diaminopimeloyl-D-alanyl-D-alanine + UDP + H(+). It functions in the pathway cell wall biogenesis; peptidoglycan biosynthesis. In terms of biological role, cell wall formation. Catalyzes the transfer of a GlcNAc subunit on undecaprenyl-pyrophosphoryl-MurNAc-pentapeptide (lipid intermediate I) to form undecaprenyl-pyrophosphoryl-MurNAc-(pentapeptide)GlcNAc (lipid intermediate II). In Shewanella sp. (strain MR-4), this protein is UDP-N-acetylglucosamine--N-acetylmuramyl-(pentapeptide) pyrophosphoryl-undecaprenol N-acetylglucosamine transferase.